The sequence spans 258 residues: Cytochrome c oxidase subunit 2 (258 aa).

Topologically, residues 1 to 41 are mitochondrial intermembrane; sequence MIVNECLFFTIALCDAAEPWQLGFQDAATPMMQGIIDLHHD. Residues 42–58 traverse the membrane as a helical segment; it reads ILFFLILILVFVLWILV. At 59–82 the chain is on the mitochondrial matrix side; that stretch reads RALWHFYYKKNPIPQRIVHGTTIE. Residues 83 to 104 traverse the membrane as a helical segment; that stretch reads ILWTIFPSIILMFIAIPSFALL. At 105-258 the chain is on the mitochondrial intermembrane side; it reads YSMDEVVVDP…VSNLFIPPTS (154 aa). Histidine 187, cysteine 222, glutamate 224, cysteine 226, histidine 230, and methionine 233 together coordinate Cu cation. Glutamate 224 is a Mg(2+) binding site.

The protein belongs to the cytochrome c oxidase subunit 2 family. In terms of assembly, component of the cytochrome c oxidase (complex IV, CIV), a multisubunit enzyme composed of a catalytic core of 3 subunits and several supernumerary subunits. The complex exists as a monomer or a dimer and forms supercomplexes (SCs) in the inner mitochondrial membrane with ubiquinol-cytochrome c oxidoreductase (cytochrome b-c1 complex, complex III, CIII). The cofactor is Cu cation.

The protein localises to the mitochondrion inner membrane. It carries out the reaction 4 Fe(II)-[cytochrome c] + O2 + 8 H(+)(in) = 4 Fe(III)-[cytochrome c] + 2 H2O + 4 H(+)(out). In terms of biological role, component of the cytochrome c oxidase, the last enzyme in the mitochondrial electron transport chain which drives oxidative phosphorylation. The respiratory chain contains 3 multisubunit complexes succinate dehydrogenase (complex II, CII), ubiquinol-cytochrome c oxidoreductase (cytochrome b-c1 complex, complex III, CIII) and cytochrome c oxidase (complex IV, CIV), that cooperate to transfer electrons derived from NADH and succinate to molecular oxygen, creating an electrochemical gradient over the inner membrane that drives transmembrane transport and the ATP synthase. Cytochrome c oxidase is the component of the respiratory chain that catalyzes the reduction of oxygen to water. Electrons originating from reduced cytochrome c in the intermembrane space (IMS) are transferred via the dinuclear copper A center (CU(A)) of subunit 2 and heme A of subunit 1 to the active site in subunit 1, a binuclear center (BNC) formed by heme A3 and copper B (CU(B)). The BNC reduces molecular oxygen to 2 water molecules using 4 electrons from cytochrome c in the IMS and 4 protons from the mitochondrial matrix. The protein is Cytochrome c oxidase subunit 2 (COX2) of Oenothera berteroana (Bertero's evening primrose).